We begin with the raw amino-acid sequence, 550 residues long: Glucose-6-phosphate isomerase (550 aa).

Glu-356 functions as the Proton donor in the catalytic mechanism. Active-site residues include His-387 and Lys-515.

Belongs to the GPI family.

It is found in the cytoplasm. It catalyses the reaction alpha-D-glucose 6-phosphate = beta-D-fructose 6-phosphate. The protein operates within carbohydrate biosynthesis; gluconeogenesis. Its pathway is carbohydrate degradation; glycolysis; D-glyceraldehyde 3-phosphate and glycerone phosphate from D-glucose: step 2/4. Catalyzes the reversible isomerization of glucose-6-phosphate to fructose-6-phosphate. This is Glucose-6-phosphate isomerase from Photobacterium profundum (strain SS9).